The primary structure comprises 36 residues: Glucagon (36 aa).

It belongs to the glucagon family. As to expression, produced by the X-cells of the islets of pancreas.

The protein localises to the secreted. Functionally, promotes hydrolysis of glycogen and lipids, and raises the blood sugar level. This chain is Glucagon (gcg), found in Hydrolagus colliei (Spotted ratfish).